The following is a 476-amino-acid chain: Nyctalopin (476 aa).

The first 18 residues, 1–18 (MLVLLLHAVVLGLPSAWA), serve as a signal peptide directing secretion. 11 LRR repeats span residues 60-84 (VSIDLDRNGLRFLGERAFGTLPSLR), 85-108 (RLSLRHNNLSFITPGAFKGLPRLA), 110-133 (LRLAHNGDLRYLHARTFAALSRLR), 134-157 (RLDLAACRLFSVPERLLAELPALR), 159-181 (LAAFDNLFRRVPGALRGLANLTH), 182-204 (AHLERGRIEAVASSSLQGLRRLR), 205-228 (SLSLQANRVRAVHAGAFGDCGVLE), 229-252 (HLLLNDNLLAELPADAFRGLRRLR), 254-276 (LNLGGNALDRVARAWFADLAELE), 277-300 (LLYLDRNSIAFVEEGAFQNLSGLL), and 302-324 (LHLNGNRLTVLAWVAFQPGFFLG). An N-linked (GlcNAc...) asparagine glycan is attached at N92. An N-linked (GlcNAc...) asparagine glycan is attached at N178. Residue N295 is glycosylated (N-linked (GlcNAc...) asparagine). The LRRCT domain occupies 336–387 (DCRLEWLRDWMEGSGRVTDVPCASPGSVAGLDLSQVTFGRSSDGLCVDPEEL). N-linked (GlcNAc...) asparagine glycans are attached at residues N388, N427, and N434.

This sequence belongs to the small leucine-rich proteoglycan (SLRP) family. SLRP class IV subfamily. Expressed in kidney and retina. Also at low levels in brain, testis and muscle. Within the retina, expressed in the inner segment of photoreceptors, outer and inner nuclear layers and the ganglion cell layer.

It localises to the secreted. The protein resides in the extracellular space. Its subcellular location is the extracellular matrix. This chain is Nyctalopin (NYX), found in Homo sapiens (Human).